The chain runs to 695 residues: Phosphate acetyltransferase (695 aa).

A phosphate acetyltransferase region spans residues F374–R695.

In the N-terminal section; belongs to the CobB/CobQ family. This sequence in the C-terminal section; belongs to the phosphate acetyltransferase and butyryltransferase family. As to quaternary structure, homohexamer.

Its subcellular location is the cytoplasm. The catalysed reaction is acetyl-CoA + phosphate = acetyl phosphate + CoA. The protein operates within metabolic intermediate biosynthesis; acetyl-CoA biosynthesis; acetyl-CoA from acetate: step 2/2. Its function is as follows. Involved in acetate metabolism. This Pseudomonas putida (strain ATCC 47054 / DSM 6125 / CFBP 8728 / NCIMB 11950 / KT2440) protein is Phosphate acetyltransferase (pta).